Reading from the N-terminus, the 266-residue chain is MKKMSEIIATLKKDYIYNLMIKGKRQDGRGFKDFRDLKLETNVIVKAEGSAKVTLGNTQVLVGVKLQTGTPFPDSQDEGVIITNLELNPIASPEFEPGPPREEAIEMARVVDRGIRESGAIDIKKLCITVGESVWIVFIDVHVLNDDGNIIDASCLAAIAALMTTMVPNEQQGLGEDVPLAMKEMPVGITIAKIGSKLMVDPSLDEEAVCETKLTIVSSSDGSVAGMQKMGISPLTEAELFEAIDLALEKAAELRGLYLEGLAKSE.

This sequence belongs to the RNase PH family. Rrp42 subfamily. In terms of assembly, component of the archaeal exosome complex. Forms a hexameric ring-like arrangement composed of 3 Rrp41-Rrp42 heterodimers. The hexameric ring associates with a trimer of Rrp4 and/or Csl4 subunits.

It is found in the cytoplasm. Non-catalytic component of the exosome, which is a complex involved in RNA degradation. Contributes to the structuring of the Rrp41 active site. This is Exosome complex component Rrp42 from Methanosarcina acetivorans (strain ATCC 35395 / DSM 2834 / JCM 12185 / C2A).